Reading from the N-terminus, the 224-residue chain is Peptide deformylase 3 (224 aa).

The Fe cation site is built by C135 and H177. The active site involves E178. H181 is a Fe cation binding site.

It belongs to the polypeptide deformylase family. Requires Fe(2+) as cofactor.

It carries out the reaction N-terminal N-formyl-L-methionyl-[peptide] + H2O = N-terminal L-methionyl-[peptide] + formate. In terms of biological role, removes the formyl group from the N-terminal Met of newly synthesized proteins. Requires at least a dipeptide for an efficient rate of reaction. N-terminal L-methionine is a prerequisite for activity but the enzyme has broad specificity at other positions. The polypeptide is Peptide deformylase 3 (Streptomyces avermitilis (strain ATCC 31267 / DSM 46492 / JCM 5070 / NBRC 14893 / NCIMB 12804 / NRRL 8165 / MA-4680)).